Here is a 137-residue protein sequence, read N- to C-terminus: ATP synthase epsilon chain 1 (137 aa).

It belongs to the ATPase epsilon chain family. In terms of assembly, F-type ATPases have 2 components, CF(1) - the catalytic core - and CF(0) - the membrane proton channel. CF(1) has five subunits: alpha(3), beta(3), gamma(1), delta(1), epsilon(1). CF(0) has three main subunits: a, b and c.

It localises to the cell inner membrane. Produces ATP from ADP in the presence of a proton gradient across the membrane. The sequence is that of ATP synthase epsilon chain 1 (atpC1) from Ralstonia nicotianae (strain ATCC BAA-1114 / GMI1000) (Ralstonia solanacearum).